The chain runs to 396 residues: Growth-regulating factor 1 (396 aa).

The QLQ domain maps to 18 to 53; the sequence is PFTASQWQELEHQALIYKYMASGTPIPSDLILPLRR. Short sequence motifs (bipartite nuclear localization signal) lie at residues 86–105 and 123–130; these read RKAE…KKWR and RGKNRSRK. Residues 90-134 form the WRC domain; it reads DPEPGRCRRTDGKKWRCSKEAYPDSKYCEKHMHRGKNRSRKPVEM. Residues 117 to 176 are disordered; that stretch reads CEKHMHRGKNRSRKPVEMSLATPPPPSSSATSAASNSSAGVAPTTTTTSSPAPSYSRPAP. Residues 120–129 show a composition bias toward basic residues; sequence HMHRGKNRSR. Low complexity predominate over residues 144–174; the sequence is SSATSAASNSSAGVAPTTTTTSSPAPSYSRP.

Belongs to the GRF family. Highly expressed in the intercalary meristem of the internode and in the shoot apex. Detected in the leaf primordia and emerging leaves in the uppermost node. Preferentially localized in the epidermis and in the tissues surrounding vascular bundles of the intercalary meristem of the internode and in adventitious roots of the second highest node. Low expression in the coleoptile and in the youngest leaf.

Its subcellular location is the nucleus. Its function is as follows. Transcription activator that plays a regulatory role in gibberellin-induced stem elongation. The protein is Growth-regulating factor 1 (GRF1) of Oryza sativa subsp. indica (Rice).